Here is a 285-residue protein sequence, read N- to C-terminus: tRNA (adenine(58)-N(1))-methyltransferase catalytic subunit TRMT61A (285 aa).

Ser-2 carries the post-translational modification N-acetylserine. 5 substrate regions span residues 20-22 (LGH), 35-42 (QTQTRHGV), 64-65 (GW), 85-89 (QILYS), and 110-117 (SGTGSGSV). S-adenosyl-L-methionine-binding positions include Leu-87, 114-116 (SGS), Glu-135, Arg-140, 163-164 (DV), and Asp-181. Substrate regions lie at residues 180 to 183 (LDIP) and 205 to 212 (SFSPCIEQ). Substrate is bound at residue Thr-274.

It belongs to the class I-like SAM-binding methyltransferase superfamily. TRM61 family. As to quaternary structure, heterotetramer; composed of two copies of TRMT6 and two copies of TRMT61A.

The protein resides in the nucleus. It carries out the reaction adenosine(58) in tRNA + S-adenosyl-L-methionine = N(1)-methyladenosine(58) in tRNA + S-adenosyl-L-homocysteine + H(+). The catalysed reaction is an adenosine in mRNA + S-adenosyl-L-methionine = an N(1)-methyladenosine in mRNA + S-adenosyl-L-homocysteine + H(+). Catalytic subunit of tRNA (adenine-N(1)-)-methyltransferase, which catalyzes the formation of N(1)-methyladenine at position 58 (m1A58) in initiator methionyl-tRNA. Catalytic subunit of mRNA N(1)-methyltransferase complex, which mediates methylation of adenosine residues at the N(1) position of a small subset of mRNAs: N(1) methylation takes place in tRNA T-loop-like structures of mRNAs and is only present at low stoichiometries. This Bos taurus (Bovine) protein is tRNA (adenine(58)-N(1))-methyltransferase catalytic subunit TRMT61A (TRMT61A).